Reading from the N-terminus, the 258-residue chain is MGTMGKAFYSVGFWIRETGQALDRLGCRLQGKNHFREQLSRHRTLMNVFDKTPNVDKGAFVAPNASLSGDVHVGRGSSIWYGCVLRGDANSISVGAGTNIQDNALVHVAKTNLSGKVLPTVIGDNVTIGHSAVLHGCTVEDEAYIGTSATVLDGAHVEKHAMVASGALVRQNTRIPSGEVWGGNPAKFLRKVTEEERVFFSSSAVEYSNLAQAHATENAKNLDEAEFKKLLNKKNARDTEYDSVLDDLTLPENVPKAA.

Residues M1 to R43 constitute a mitochondrion transit peptide. Residues R86–D88 and Q101–D102 each bind substrate. H107, H130, and H135 together coordinate Zn(2+). Position 209 (N209) interacts with substrate.

Belongs to the gamma-class carbonic anhydrase family. As to quaternary structure, homotrimer. Component of the oxidoreductase respiratory chain complex I; element of the extra matrix-exposed domain, which is attached to the membrane arm of this complex. The cofactor is Zn(2+).

The protein localises to the mitochondrion membrane. Its function is as follows. Enzyme involved in the catabolism of H(2)CO(3) but that does not mediates the reversible hydration of carbon dioxide. Mediates complex I assembly in mitochondria and respiration. The chain is Gamma carbonic anhydrase 3, mitochondrial (GAMMACA3) from Arabidopsis thaliana (Mouse-ear cress).